We begin with the raw amino-acid sequence, 527 residues long: Peptide chain release factor 3 (527 aa).

In terms of domain architecture, tr-type G spans 9–277 (AKRRTFAIIS…AVVDWAPRPL (269 aa)). Residues 18-25 (SHPDAGKT), 86-90 (DTPGH), and 140-143 (NKLD) contribute to the GTP site.

It belongs to the TRAFAC class translation factor GTPase superfamily. Classic translation factor GTPase family. PrfC subfamily.

The protein resides in the cytoplasm. Increases the formation of ribosomal termination complexes and stimulates activities of RF-1 and RF-2. It binds guanine nucleotides and has strong preference for UGA stop codons. It may interact directly with the ribosome. The stimulation of RF-1 and RF-2 is significantly reduced by GTP and GDP, but not by GMP. This Pseudomonas fluorescens (strain Pf0-1) protein is Peptide chain release factor 3.